A 215-amino-acid chain; its full sequence is Probable transaldolase (215 aa).

Lysine 83 functions as the Schiff-base intermediate with substrate in the catalytic mechanism.

The protein belongs to the transaldolase family. Type 3B subfamily.

The protein resides in the cytoplasm. The catalysed reaction is D-sedoheptulose 7-phosphate + D-glyceraldehyde 3-phosphate = D-erythrose 4-phosphate + beta-D-fructose 6-phosphate. It participates in carbohydrate degradation; pentose phosphate pathway; D-glyceraldehyde 3-phosphate and beta-D-fructose 6-phosphate from D-ribose 5-phosphate and D-xylulose 5-phosphate (non-oxidative stage): step 2/3. Functionally, transaldolase is important for the balance of metabolites in the pentose-phosphate pathway. This is Probable transaldolase from Clostridium perfringens (strain SM101 / Type A).